We begin with the raw amino-acid sequence, 372 residues long: F-box/kelch-repeat protein At5g49000 (372 aa).

A compositionally biased stretch (basic residues) spans 1–11 (MSSPERKRKKR). The segment at 1–24 (MSSPERKRKKRSLEPSPESTPNPS) is disordered. In terms of domain architecture, F-box spans 19–65 (STPNPSLPDDLIVSILARVSRLYYPILSLVSKSSRTLVTSPELYKTR). Kelch repeat units follow at residues 131–177 (NIYA…VVDG), 179–224 (IYVA…VIEG), 226–271 (IYIF…LYCY), and 273–312 (PGGIKWYESEKRSWRKLRGLKGLSKLASSCVKLADYGGKM).

This is F-box/kelch-repeat protein At5g49000 from Arabidopsis thaliana (Mouse-ear cress).